The primary structure comprises 390 residues: Transforming growth factor beta-1 proprotein (390 aa).

The signal sequence occupies residues 1–29; sequence MPPSGLRLLPLLLPLPWLLVLTPGRPAAG. The interval 30 to 74 is straightjacket domain; that stretch reads LSTCKTIDMELVKRKRIEAIRGQILSKLRLASPPSQGEVPPGPLP. Positions 75-271 are arm domain; sequence EAVLALYNST…ATPLERAQHL (197 aa). N-linked (GlcNAc...) asparagine glycosylation is found at Asn-82, Asn-136, and Asn-176. A bowtie tail region spans residues 226-252; it reads DSKDNVLHVEINGISPKRRGDLGTIHD. The short motif at 244–246 is the Cell attachment site element; the sequence is RGD. Cystine bridges form between Cys-285/Cys-294, Cys-293/Cys-356, Cys-322/Cys-387, and Cys-326/Cys-389.

It belongs to the TGF-beta family. As to quaternary structure, homodimer; disulfide-linked. Interacts with the serine proteases, HTRA1 and HTRA3: the interaction with either inhibits TGFB1-mediated signaling and the HTRA protease activity is required for this inhibition. May interact with THSD4; this interaction may lead to sequestration by FBN1 microfibril assembly and attenuation of TGFB signaling. Interacts with CD109, DPT and ASPN. Interacts with EFEMP2. Interacts with TSKU; the interaction contributes to regulation of the hair cycle. Interacts with TGFBR3. Homodimer; disulfide-linked. Interacts with transforming growth factor beta-1 (TGF-beta-1) chain; interaction is non-covalent and maintains TGF-beta-1 in a latent state; each latency-associated peptide (LAP) monomer interacts with TGF-beta-1 in the other monomer. Interacts with LTBP1; leading to regulation of TGF-beta-1 activation. Interacts with LRRC32/GARP; leading to regulation of TGF-beta-1 activation on the surface of activated regulatory T-cells (Tregs). Interacts with LRRC33/NRROS; leading to regulation of TGF-beta-1 activation in macrophages and microglia. Interacts (via cell attachment site) with integrins ITGAV and ITGB6 (ITGAV:ITGB6), leading to release of the active TGF-beta-1. Interacts with NREP; the interaction results in a decrease in TGFB1 autoinduction. Interacts with HSP90AB1; inhibits latent TGFB1 activation. In terms of assembly, homodimer; disulfide-linked. Interacts with TGF-beta receptors (TGFBR1 and TGFBR2), leading to signal transduction. Transforming growth factor beta-1 proprotein: The precursor proprotein is cleaved in the Golgi apparatus by FURIN to form Transforming growth factor beta-1 (TGF-beta-1) and Latency-associated peptide (LAP) chains, which remain non-covalently linked, rendering TGF-beta-1 inactive. Post-translationally, N-glycosylated. Deglycosylation leads to activation of Transforming growth factor beta-1 (TGF-beta-1); mechanisms triggering deglycosylation-driven activation of TGF-beta-1 are however unclear. Abundant in the bone matrix. Expressed in cardiomyocytes.

The protein localises to the secreted. It is found in the extracellular space. The protein resides in the extracellular matrix. In terms of biological role, transforming growth factor beta-1 proprotein: Precursor of the Latency-associated peptide (LAP) and Transforming growth factor beta-1 (TGF-beta-1) chains, which constitute the regulatory and active subunit of TGF-beta-1, respectively. Its function is as follows. Required to maintain the Transforming growth factor beta-1 (TGF-beta-1) chain in a latent state during storage in extracellular matrix. Associates non-covalently with TGF-beta-1 and regulates its activation via interaction with 'milieu molecules', such as LTBP1, LRRC32/GARP and LRRC33/NRROS, that control activation of TGF-beta-1. Interaction with LRRC33/NRROS regulates activation of TGF-beta-1 in macrophages and microglia. Interaction with LRRC32/GARP controls activation of TGF-beta-1 on the surface of activated regulatory T-cells (Tregs). Interaction with integrins (ITGAV:ITGB6 or ITGAV:ITGB8) results in distortion of the Latency-associated peptide chain and subsequent release of the active TGF-beta-1. Multifunctional protein that regulates the growth and differentiation of various cell types and is involved in various processes, such as normal development, immune function, microglia function and responses to neurodegeneration. Activation into mature form follows different steps: following cleavage of the proprotein in the Golgi apparatus, Latency-associated peptide (LAP) and Transforming growth factor beta-1 (TGF-beta-1) chains remain non-covalently linked rendering TGF-beta-1 inactive during storage in extracellular matrix. At the same time, LAP chain interacts with 'milieu molecules', such as LTBP1, LRRC32/GARP and LRRC33/NRROS that control activation of TGF-beta-1 and maintain it in a latent state during storage in extracellular milieus. TGF-beta-1 is released from LAP by integrins (ITGAV:ITGB6 or ITGAV:ITGB8): integrin-binding to LAP stabilizes an alternative conformation of the LAP bowtie tail and results in distortion of the LAP chain and subsequent release of the active TGF-beta-1. Once activated following release of LAP, TGF-beta-1 acts by binding to TGF-beta receptors (TGFBR1 and TGFBR2), which transduce signal. While expressed by many cells types, TGF-beta-1 only has a very localized range of action within cell environment thanks to fine regulation of its activation by Latency-associated peptide chain (LAP) and 'milieu molecules'. Plays an important role in bone remodeling: acts as a potent stimulator of osteoblastic bone formation, causing chemotaxis, proliferation and differentiation in committed osteoblasts. Can promote either T-helper 17 cells (Th17) or regulatory T-cells (Treg) lineage differentiation in a concentration-dependent manner. At high concentrations, leads to FOXP3-mediated suppression of RORC and down-regulation of IL-17 expression, favoring Treg cell development. At low concentrations in concert with IL-6 and IL-21, leads to expression of the IL-17 and IL-23 receptors, favoring differentiation to Th17 cells. Stimulates sustained production of collagen through the activation of CREB3L1 by regulated intramembrane proteolysis (RIP). Mediates SMAD2/3 activation by inducing its phosphorylation and subsequent translocation to the nucleus. Positively regulates odontoblastic differentiation in dental papilla cells, via promotion of IPO7-mediated translocation of phosphorylated SMAD2 to the nucleus and subsequent transcription of target genes. Can induce epithelial-to-mesenchymal transition (EMT) and cell migration in various cell types. The chain is Transforming growth factor beta-1 proprotein (Tgfb1) from Rattus norvegicus (Rat).